The chain runs to 519 residues: Histidine ammonia-lyase (519 aa).

A cross-link (5-imidazolinone (Ala-Gly)) is located at residues 146–148 (ASG). Position 147 is a 2,3-didehydroalanine (Ser) (serine 147).

It belongs to the PAL/histidase family. Post-translationally, contains an active site 4-methylidene-imidazol-5-one (MIO), which is formed autocatalytically by cyclization and dehydration of residues Ala-Ser-Gly.

It is found in the cytoplasm. It catalyses the reaction L-histidine = trans-urocanate + NH4(+). Its pathway is amino-acid degradation; L-histidine degradation into L-glutamate; N-formimidoyl-L-glutamate from L-histidine: step 1/3. The polypeptide is Histidine ammonia-lyase (Psychrobacter sp. (strain PRwf-1)).